We begin with the raw amino-acid sequence, 258 residues long: RBPJ-interacting and tubulin-associated protein 1 (258 aa).

3 disordered regions span residues Phe-28–Lys-86, Thr-132–Ser-182, and Ala-195–Lys-258. The segment covering Ser-71–Leu-81 has biased composition (polar residues). The Nuclear localization signal motif lies at Leu-81–Ser-97. Residues Arg-117–Pro-145 are interaction with RBPJ/RBPSUH. The segment at Pro-145–Lys-258 is interaction with tubulin. Composition is skewed to polar residues over residues His-201 to Pro-212 and Gly-236 to Gln-245.

It belongs to the RITA family. In terms of assembly, interacts with RBPJ/RBPSUH.

The protein localises to the cytoplasm. Its subcellular location is the nucleus. It localises to the cytoskeleton. It is found in the microtubule organizing center. The protein resides in the centrosome. In terms of biological role, tubulin-binding protein that acts as a negative regulator of Notch signaling pathway. Shuttles between the cytoplasm and the nucleus and mediates the nuclear export of RBPJ/RBPSUH, thereby preventing the interaction between RBPJ/RBPSUH and NICD product of Notch proteins (Notch intracellular domain), leading to down-regulate Notch-mediated transcription. May play a role in neurogenesis. This is RBPJ-interacting and tubulin-associated protein 1 (Rita1) from Rattus norvegicus (Rat).